A 146-amino-acid chain; its full sequence is 3-hydroxyacyl-[acyl-carrier-protein] dehydratase FabZ (146 aa).

Residue histidine 46 is part of the active site.

This sequence belongs to the thioester dehydratase family. FabZ subfamily.

It is found in the cytoplasm. It carries out the reaction a (3R)-hydroxyacyl-[ACP] = a (2E)-enoyl-[ACP] + H2O. Its function is as follows. Involved in unsaturated fatty acids biosynthesis. Catalyzes the dehydration of short chain beta-hydroxyacyl-ACPs and long chain saturated and unsaturated beta-hydroxyacyl-ACPs. The protein is 3-hydroxyacyl-[acyl-carrier-protein] dehydratase FabZ of Acinetobacter baumannii (strain ATCC 17978 / DSM 105126 / CIP 53.77 / LMG 1025 / NCDC KC755 / 5377).